Consider the following 158-residue polypeptide: Large ribosomal subunit protein eL24 (158 aa).

The segment covering 98–146 (LDASHKKAEAEKAVRELKQKKANDIEKKRADRKLQGKDVKAAKKAETKK) has biased composition (basic and acidic residues). The segment at 98–158 (LDASHKKAEA…QPVGAKGGKK (61 aa)) is disordered.

It belongs to the eukaryotic ribosomal protein eL24 family.

This is Large ribosomal subunit protein eL24 (RPL24) from Tetrahymena thermophila (strain SB210).